A 150-amino-acid chain; its full sequence is CCAAT/enhancer-binding protein gamma (150 aa).

A Glycyl lysine isopeptide (Lys-Gly) (interchain with G-Cter in SUMO2) cross-link involves residue lysine 3. Residues 27–94 (GLQQVPQLVP…QKAQDTLQRV (68 aa)) form a disordered region. The span at 28 to 37 (LQQVPQLVPA) shows a compositional bias: low complexity. The span at 56–72 (SPMDRNSDEYRQRRERN) shows a compositional bias: basic and acidic residues. The bZIP domain maps to 62-125 (SDEYRQRRER…SVLKDLFLEH (64 aa)). Positions 66-93 (RQRRERNNMAVKKSRLKSKQKAQDTLQR) are basic motif. Positions 97–118 (LKEENERLEAKIKLLTKELSVL) are leucine-zipper.

Belongs to the bZIP family. C/EBP subfamily. In terms of assembly, binds DNA as a dimer and can form stable heterodimers with CEBPA and CEBPB. Interacts with ZNF638; this interaction increases transcriptional activation.

The protein localises to the nucleus. Functionally, transcription factor that binds to the promoter and the enhancer regions of target genes. Binds to the enhancer element PRE-I (positive regulatory element-I) of the IL-4 gene. Binds to the promoter and the enhancer of the immunoglobulin heavy chain. Binds to GPE1, a cis-acting element in the G-CSF gene promoter. The polypeptide is CCAAT/enhancer-binding protein gamma (CEBPG) (Homo sapiens (Human)).